A 500-amino-acid polypeptide reads, in one-letter code: ADP,ATP carrier protein 5 (500 aa).

Helical transmembrane passes span 26 to 46 (LGKFIPISALMFCILFNQNIL), 62 to 82 (IAGFAKVYCVTPVAALFVIIY), 94 to 114 (IFYYLSAFFISCFILFAFVIY), 149 to 169 (YIVYYSLAELWPNIFYVLLFW), 184 to 204 (FYTLFSLFGNSSLILVGFLMM), 224 to 244 (ITLVQVSTTIVAIVAIICCLL), 287 to 307 (LWLLLICSAAFGFAINLVEAV), 328 to 348 (LYILWTGVAIIVMTIIGNNVM), 357 to 377 (AVISPVIIMVTGILFFVLIVF), 381 to 401 (ILSLFDGAILMSPLALAVSIG), and 469 to 489 (SISPILMVVFTFVCFAWIYAV).

The protein belongs to the ADP/ATP translocase tlc family.

Its subcellular location is the cell membrane. Functionally, provides the rickettsial cell with host ATP in exchange for rickettsial ADP. This is an obligate exchange system. This energy acquiring activity is an important component of rickettsial parasitism. The protein is ADP,ATP carrier protein 5 (tlcE) of Rickettsia typhi (strain ATCC VR-144 / Wilmington).